The sequence spans 483 residues: Glycogen synthase (483 aa).

ADP-alpha-D-glucose is bound at residue K18.

Belongs to the glycosyltransferase 1 family. Bacterial/plant glycogen synthase subfamily.

It carries out the reaction [(1-&gt;4)-alpha-D-glucosyl](n) + ADP-alpha-D-glucose = [(1-&gt;4)-alpha-D-glucosyl](n+1) + ADP + H(+). It participates in glycan biosynthesis; glycogen biosynthesis. Functionally, synthesizes alpha-1,4-glucan chains using ADP-glucose. The chain is Glycogen synthase from Methylocella silvestris (strain DSM 15510 / CIP 108128 / LMG 27833 / NCIMB 13906 / BL2).